A 1189-amino-acid polypeptide reads, in one-letter code: Phosphinothricin tripeptide synthetase PhsB (1189 aa).

Positions 5-80 (QTDDVVTGRI…ALAKRIRASR (76 aa)) constitute a Carrier 1 domain. S40 is modified (O-(pantetheine 4'-phosphoryl)serine). 2 disordered regions span residues 75–97 (RIRASRSTAPTASGPPRTAPVDS) and 454–476 (TPDRDGREPGEGPFAREESGGDT). Positions 100-541 (TAPLTFQQEP…VALLPLQEPA (442 aa)) are condensation. A compositionally biased stretch (basic and acidic residues) spans 455 to 472 (PDRDGREPGEGPFAREES). Positions 572 to 969 (AQAHRTPDAV…GREDGQVKLR (398 aa)) are adenylation. Positions 1045–1081 (DRVPLTPSGKTDRKALPDPAAGEQPRSGRGAAPGTPA) are disordered. In terms of domain architecture, Carrier 2 spans 1076–1151 (APGTPAEREL…DFALAVVTAQ (76 aa)). O-(pantetheine 4'-phosphoryl)serine is present on S1111.

This sequence belongs to the NRP synthetase family. Requires pantetheine 4'-phosphate as cofactor.

It catalyses the reaction holo-[peptidyl-carrier protein] + L-alanine + ATP = L-alanyl-[peptidyl-carrier protein] + AMP + diphosphate. It functions in the pathway secondary metabolite biosynthesis; bialaphos biosynthesis. Functionally, involved in the biosynthesis of phosphinothricin tripeptide (PTT), also known as bialaphos (BA), a natural-product antibiotic and potent herbicide. Adenylates L-alanine and loads it onto a peptidyl carrier domain via a thioester linkage to the phosphopanthetheine moiety. Shows weaker activity with aminobutyric acid and L-serine. This chain is Phosphinothricin tripeptide synthetase PhsB, found in Streptomyces viridochromogenes (strain DSM 40736 / JCM 4977 / BCRC 1201 / Tue 494).